A 1068-amino-acid polypeptide reads, in one-letter code: Carbamoyl phosphate synthase large chain (1068 aa).

Residues methionine 1 to glutamate 401 are carboxyphosphate synthetic domain. Positions 129, 169, 175, 176, 208, 210, 215, 241, 242, 243, 284, and 298 each coordinate ATP. Positions lysine 133–leucine 327 constitute an ATP-grasp 1 domain. Mg(2+) is bound by residues glutamine 284, glutamate 298, and asparagine 300. 3 residues coordinate Mn(2+): glutamine 284, glutamate 298, and asparagine 300. Residues glutamine 402–alanine 546 are oligomerization domain. A carbamoyl phosphate synthetic domain region spans residues alanine 547 to glycine 930. The 191-residue stretch at aspartate 672–methionine 862 folds into the ATP-grasp 2 domain. 10 residues coordinate ATP: arginine 708, lysine 747, leucine 749, glutamate 753, glycine 778, valine 779, histidine 780, serine 781, glutamine 821, and glutamate 833. Positions 821, 833, and 835 each coordinate Mg(2+). Glutamine 821, glutamate 833, and asparagine 835 together coordinate Mn(2+). Residues valine 931–leucine 1068 enclose the MGS-like domain. The segment at valine 931–leucine 1068 is allosteric domain.

Belongs to the CarB family. As to quaternary structure, composed of two chains; the small (or glutamine) chain promotes the hydrolysis of glutamine to ammonia, which is used by the large (or ammonia) chain to synthesize carbamoyl phosphate. Tetramer of heterodimers (alpha,beta)4. Requires Mg(2+) as cofactor. It depends on Mn(2+) as a cofactor.

The catalysed reaction is hydrogencarbonate + L-glutamine + 2 ATP + H2O = carbamoyl phosphate + L-glutamate + 2 ADP + phosphate + 2 H(+). It catalyses the reaction hydrogencarbonate + NH4(+) + 2 ATP = carbamoyl phosphate + 2 ADP + phosphate + 2 H(+). The protein operates within amino-acid biosynthesis; L-arginine biosynthesis; carbamoyl phosphate from bicarbonate: step 1/1. Its pathway is pyrimidine metabolism; UMP biosynthesis via de novo pathway; (S)-dihydroorotate from bicarbonate: step 1/3. Large subunit of the glutamine-dependent carbamoyl phosphate synthetase (CPSase). CPSase catalyzes the formation of carbamoyl phosphate from the ammonia moiety of glutamine, carbonate, and phosphate donated by ATP, constituting the first step of 2 biosynthetic pathways, one leading to arginine and/or urea and the other to pyrimidine nucleotides. The large subunit (synthetase) binds the substrates ammonia (free or transferred from glutamine from the small subunit), hydrogencarbonate and ATP and carries out an ATP-coupled ligase reaction, activating hydrogencarbonate by forming carboxy phosphate which reacts with ammonia to form carbamoyl phosphate. This Agathobacter rectalis (strain ATCC 33656 / DSM 3377 / JCM 17463 / KCTC 5835 / VPI 0990) (Eubacterium rectale) protein is Carbamoyl phosphate synthase large chain.